The sequence spans 109 residues: MSRAKGNVAEDRASLFLLENGYMIVDKNFYSRFGEIDIIAYKEEVWHFVEVKSALDYELAVQNITKSKLSKLIKTGDVYLKKNALHVDYMYDAIIVTPENIWHLENITL.

This sequence belongs to the UPF0102 family.

This chain is UPF0102 protein Suden_1901, found in Sulfurimonas denitrificans (strain ATCC 33889 / DSM 1251) (Thiomicrospira denitrificans (strain ATCC 33889 / DSM 1251)).